The sequence spans 488 residues: Type II restriction enzyme HgaI (488 aa).

It catalyses the reaction Endonucleolytic cleavage of DNA to give specific double-stranded fragments with terminal 5'-phosphates.. Its function is as follows. An S subtype restriction enzyme that recognizes the double-stranded sequences 5'-GACGC-3' and 5'-GCGTC-3' and cleaves respectively 10 bases after G-1 and 10 bases before G'-1. The protein is Type II restriction enzyme HgaI (hgaIR) of Avibacterium volantium (Pasteurella volantium).